A 194-amino-acid polypeptide reads, in one-letter code: Protein GrpE (194 aa).

Belongs to the GrpE family. Homodimer.

Its subcellular location is the cytoplasm. Participates actively in the response to hyperosmotic and heat shock by preventing the aggregation of stress-denatured proteins, in association with DnaK and GrpE. It is the nucleotide exchange factor for DnaK and may function as a thermosensor. Unfolded proteins bind initially to DnaJ; upon interaction with the DnaJ-bound protein, DnaK hydrolyzes its bound ATP, resulting in the formation of a stable complex. GrpE releases ADP from DnaK; ATP binding to DnaK triggers the release of the substrate protein, thus completing the reaction cycle. Several rounds of ATP-dependent interactions between DnaJ, DnaK and GrpE are required for fully efficient folding. This chain is Protein GrpE, found in Aliivibrio fischeri (strain ATCC 700601 / ES114) (Vibrio fischeri).